Here is a 715-residue protein sequence, read N- to C-terminus: Lactococcin transport/processing ATP-binding protein LcnC-like (715 aa).

The region spanning 11–138 is the Peptidase C39 domain; sequence QVDEMDCGCA…SEWTGISLFL (128 aa). Residue cysteine 17 is part of the active site. Transmembrane regions (helical) follow at residues 167–187, 197–217, 237–257, 282–302, and 307–327; these read VILN…LGSY, IPNA…LTYI, LAID…MSFF, TILS…ILGL, and LFLL…IFTP. Positions 168–450 constitute an ABC transmembrane type-1 domain; that stretch reads ILNIVIASFI…IINLQTKLQK (283 aa). The ABC transporter domain maps to 482-715; it reads LNMSEISYQY…NGFYAQLYHN (234 aa). Residue 515–522 participates in ATP binding; it reads GISGSGKS.

The protein belongs to the ABC transporter superfamily. HlyB family.

The protein localises to the cell membrane. In terms of biological role, involved in the export process of a bacteriocin lactococcin. The chain is Lactococcin transport/processing ATP-binding protein LcnC-like (lcnC) from Lactococcus lactis subsp. lactis (strain IL1403) (Streptococcus lactis).